The primary structure comprises 190 residues: Biphenyl-2,3-diol 1,2-dioxygenase 3 (190 aa).

The region spanning 6–125 (RLAHFVLQTN…DGNMVELQID (120 aa)) is the VOC domain. Fe cation-binding residues include His-9, His-73, and Glu-121.

The protein belongs to the extradiol ring-cleavage dioxygenase family. Homohexamer. Requires Fe(2+) as cofactor.

It carries out the reaction biphenyl-2,3-diol + O2 = 2-hydroxy-6-oxo-6-phenylhexa-2,4-dienoate + H(+). It functions in the pathway xenobiotic degradation; biphenyl degradation; 2-hydroxy-2,4-pentadienoate and benzoate from biphenyl: step 3/4. This Rhodococcus globerulus protein is Biphenyl-2,3-diol 1,2-dioxygenase 3 (bphC3).